A 39-amino-acid polypeptide reads, in one-letter code: Pro-opiomelanocortin (39 aa).

Val13 is subject to Valine amide.

The protein belongs to the POMC family.

Its subcellular location is the secreted. Its function is as follows. Precursor protein for pituitary hormones that regulate stress and environmental adaptation. In terms of biological role, stimulates the adrenal glands to release cortisol. Anorexigenic peptide. Increases the pigmentation of skin by increasing melanin production in melanocytes. The sequence is that of Pro-opiomelanocortin (POMC) from Struthio camelus (Common ostrich).